We begin with the raw amino-acid sequence, 58 residues long: uncharacterized protein (58 aa).

This is an uncharacterized protein from Archaeoglobus fulgidus (strain ATCC 49558 / DSM 4304 / JCM 9628 / NBRC 100126 / VC-16).